Reading from the N-terminus, the 300-residue chain is Dihydroorotate dehydrogenase B (NAD(+)), catalytic subunit (300 aa).

FMN is bound by residues serine 21 and 45 to 46 (KG). Residues lysine 45 and 69 to 73 (NSIGL) each bind substrate. 2 residues coordinate FMN: asparagine 99 and asparagine 126. Substrate is bound at residue asparagine 126. The active-site Nucleophile is cysteine 129. Residues lysine 164 and valine 190 each coordinate FMN. Substrate is bound at residue 191 to 192 (NT). Residues glycine 216, 242–243 (GG), and 264–265 (GT) each bind FMN.

It belongs to the dihydroorotate dehydrogenase family. Type 1 subfamily. Heterotetramer of 2 PyrK and 2 PyrD type B subunits. The cofactor is FMN.

Its subcellular location is the cytoplasm. The catalysed reaction is (S)-dihydroorotate + NAD(+) = orotate + NADH + H(+). The protein operates within pyrimidine metabolism; UMP biosynthesis via de novo pathway; orotate from (S)-dihydroorotate (NAD(+) route): step 1/1. Catalyzes the conversion of dihydroorotate to orotate with NAD(+) as electron acceptor. This Petrotoga mobilis (strain DSM 10674 / SJ95) protein is Dihydroorotate dehydrogenase B (NAD(+)), catalytic subunit (pyrD).